Here is a 414-residue protein sequence, read N- to C-terminus: 2,3-bisphosphoglycerate-independent phosphoglycerate mutase (414 aa).

Belongs to the BPG-independent phosphoglycerate mutase family. A-PGAM subfamily.

The enzyme catalyses (2R)-2-phosphoglycerate = (2R)-3-phosphoglycerate. Its pathway is carbohydrate degradation; glycolysis; pyruvate from D-glyceraldehyde 3-phosphate: step 3/5. Its function is as follows. Catalyzes the interconversion of 2-phosphoglycerate and 3-phosphoglycerate. The chain is 2,3-bisphosphoglycerate-independent phosphoglycerate mutase from Saccharolobus islandicus (strain L.S.2.15 / Lassen #1) (Sulfolobus islandicus).